Here is a 91-residue protein sequence, read N- to C-terminus: DNA-directed RNA polymerase subunit omega (91 aa).

Belongs to the RNA polymerase subunit omega family. As to quaternary structure, the RNAP catalytic core consists of 2 alpha, 1 beta, 1 beta' and 1 omega subunit. When a sigma factor is associated with the core the holoenzyme is formed, which can initiate transcription.

It carries out the reaction RNA(n) + a ribonucleoside 5'-triphosphate = RNA(n+1) + diphosphate. Its function is as follows. Promotes RNA polymerase assembly. Latches the N- and C-terminal regions of the beta' subunit thereby facilitating its interaction with the beta and alpha subunits. The chain is DNA-directed RNA polymerase subunit omega from Photorhabdus laumondii subsp. laumondii (strain DSM 15139 / CIP 105565 / TT01) (Photorhabdus luminescens subsp. laumondii).